The chain runs to 176 residues: Large ribosomal subunit protein uL6 (176 aa).

The segment covering 151–170 has biased composition (basic and acidic residues); it reads RPPEPYKGKGVRYADEQVRR. A disordered region spans residues 151-176; sequence RPPEPYKGKGVRYADEQVRRKEAKKK.

The protein belongs to the universal ribosomal protein uL6 family. Part of the 50S ribosomal subunit.

Functionally, this protein binds to the 23S rRNA, and is important in its secondary structure. It is located near the subunit interface in the base of the L7/L12 stalk, and near the tRNA binding site of the peptidyltransferase center. This chain is Large ribosomal subunit protein uL6, found in Shewanella piezotolerans (strain WP3 / JCM 13877).